A 355-amino-acid polypeptide reads, in one-letter code: Probable butyrate kinase (355 aa).

It belongs to the acetokinase family.

Its subcellular location is the cytoplasm. The catalysed reaction is butanoate + ATP = butanoyl phosphate + ADP. This is Probable butyrate kinase from Listeria monocytogenes serovar 1/2a (strain ATCC BAA-679 / EGD-e).